Consider the following 431-residue polypeptide: Protein PIN-LIKES 6 (431 aa).

Topologically, residues 1–29 (MIARILAALADSMEMPVAAGGGSVLGTIK) are lumenal. The chain crosses the membrane as a helical span at residues 30-50 (IAVMPIAKVFTMCFLGLLMAS). Over 51 to 66 (KYVNILPPSGRKLLNG) the chain is Cytoplasmic. A helical membrane pass occupies residues 67-87 (LVFSLLLPCLIFSQLGQAVTL). The Lumenal segment spans residues 88–93 (QKMLQW). The chain crosses the membrane as a helical span at residues 94 to 114 (WFIPVNVVLGTISGSIIGFIV). At 115–128 (ASIVRPPYPYFKFT) the chain is on the cytoplasmic side. A helical membrane pass occupies residues 129–149 (IIQIGVGNIGNVPLVLLAALC). Topologically, residues 150–169 (RDTSNPFGDSEKCSIDGTAY) are lumenal. A helical membrane pass occupies residues 170 to 190 (ISFGQWVGAIILYTYVYQMFA). At 191-268 (PPPEGFDAEE…FLYEKLKLKQ (78 aa)) the chain is on the cytoplasmic side. The chain crosses the membrane as a helical span at residues 269 to 289 (IVQPAIVASILAMILGAIPFT). Residues 290–306 (KKLIFTNGAPLFFFTDS) lie on the Lumenal side of the membrane. The chain crosses the membrane as a helical span at residues 307-327 (CMILGDAMIPCILLALGGNLI). Topologically, residues 328–340 (NGPGSSKLGFKTT) are cytoplasmic. The chain crosses the membrane as a helical span at residues 341–361 (AAIIIGRLVLVPPVGLGIVTV). Over 362–376 (ADKLGFLPADDKMFR) the chain is Lumenal. The chain crosses the membrane as a helical span at residues 377–397 (FVLLLQHTMPTSVLSGAVANL). Over 398-406 (RGCGRESAA) the chain is Cytoplasmic. Residues 407–427 (VLFWVHIFAIFSMAGWMVLYI) form a helical membrane-spanning segment. Residues 428 to 431 (NILF) lie on the Lumenal side of the membrane.

Belongs to the auxin efflux carrier (TC 2.A.69.2) family. In terms of tissue distribution, expressed in seedlings, rosette and cauline leaves, stems and flowers.

The protein resides in the endoplasmic reticulum membrane. Functionally, involved in cellular auxin homeostasis by regulating auxin metabolism. Regulates intracellular auxin accumulation at the endoplasmic reticulum and thus auxin availability for nuclear auxin signaling. This Arabidopsis thaliana (Mouse-ear cress) protein is Protein PIN-LIKES 6.